The primary structure comprises 209 residues: Redox-sensing transcriptional repressor Rex (209 aa).

Residues 16-55 (LYYRFIQNLSLSGKQRVSSAELSEAVKVDSATIRRDFSYF) constitute a DNA-binding region (H-T-H motif). NAD(+) is bound at residue 90–95 (GVGNLG).

The protein belongs to the transcriptional regulatory Rex family. In terms of assembly, homodimer.

The protein localises to the cytoplasm. Functionally, modulates transcription in response to changes in cellular NADH/NAD(+) redox state. The sequence is that of Redox-sensing transcriptional repressor Rex from Bacillus cereus (strain G9842).